The following is a 149-amino-acid chain: Natriuretic peptides A (149 aa).

The first 23 residues, 1–23 (MGSPIAASFLLFLAVQLLGQTGA), serve as a signal peptide directing secretion. Propeptides lie at residues 24 to 121 (NPVY…AAPR) and 91 to 101 (DGGALGRSPWD). The interval 49-103 (MPLEDEAESPQALSEQNAEAGAALSPLPEVPPWTGEVSPAQRDGGALGRSPWDSS) is disordered. Residue Ser127 is modified to Phosphoserine. A disulfide bridge links Cys128 with Cys144. The interval 145 to 149 (NSFRY) is important for degradation of atrial natriuretic peptide by IDE.

This sequence belongs to the natriuretic peptide family. In terms of assembly, homodimer; disulfide-linked antiparallel dimer. Post-translationally, the precursor molecule is proteolytically cleaved by CORIN at Arg-121 to produce the atrial natriuretic peptide. Undergoes further proteolytic cleavage by unknown proteases to give rise to long-acting natriuretic peptide, vessel dilator and kaliuretic peptide. Additional processing gives rise to the auriculin and atriopeptin peptides. In the kidneys, alternative processing by an unknown protease results in the peptide urodilatin. In terms of processing, cleavage by MME initiates degradation of the factor and thereby regulates its activity. Degradation by IDE results in reduced activation of NPR1 (in vitro). During IDE degradation, the resulting products can temporarily stimulate NPR2 to produce cGMP, before the fragments are completely degraded and inactivated by IDE (in vitro). Degraded by IDE. Post-translationally, phosphorylation on Ser-127 decreases vasorelaxant activity.

The protein resides in the secreted. The protein localises to the perikaryon. It localises to the cell projection. Functionally, hormone that plays a key role in mediating cardio-renal homeostasis, and is involved in vascular remodeling and regulating energy metabolism. Acts by specifically binding and stimulating NPR1 to produce cGMP, which in turn activates effector proteins, such as PRKG1, that drive various biological responses. Regulates vasodilation, natriuresis, diuresis and aldosterone synthesis and is therefore essential for regulating blood pressure, controlling the extracellular fluid volume and maintaining the fluid-electrolyte balance. Also involved in inhibiting cardiac remodeling and cardiac hypertrophy by inducing cardiomyocyte apoptosis and attenuating the growth of cardiomyocytes and fibroblasts. Plays a role in female pregnancy by promoting trophoblast invasion and spiral artery remodeling in uterus, and thus prevents pregnancy-induced hypertension. In adipose tissue, acts in various cGMP- and PKG-dependent pathways to regulate lipid metabolism and energy homeostasis. This includes up-regulating lipid metabolism and mitochondrial oxygen utilization by activating the AMP-activated protein kinase (AMPK), and increasing energy expenditure by acting via MAPK11 to promote the UCP1-dependent thermogenesis of brown adipose tissue. Binds the clearance receptor NPR3 which removes the hormone from circulation. In terms of biological role, may have a role in cardio-renal homeostasis through regulation of natriuresis, diuresis, vasodilation, and inhibiting aldosterone synthesis. In vitro, promotes the production of cGMP and induces vasodilation. May promote natriuresis, at least in part, by enhancing prostaglandin E2 synthesis resulting in the inhibition of renal Na+-K+-ATPase. However reports on the involvement of this peptide in mammal blood volume and blood pressure homeostasis are conflicting; according to a report, in vivo it is not sufficient to activate cGMP and does not inhibit collecting duct transport nor effect diuresis and natriuresis. Appears to bind to specific receptors that are distinct from the receptors bound by atrial natriuretic peptide and vessel dilator. Possibly enhances protein excretion in urine by decreasing proximal tubular protein reabsorption. Its function is as follows. May have a role in cardio-renal homeostasis through regulation of natriuresis, diuresis, and vasodilation. In vitro, promotes the production of cGMP and induces vasodilation. May promote natriuresis, at least in part, by enhancing prostaglandin E2 synthesis resulting in the inhibition of renal Na+-K+-ATPase. However reports on the involvement of this peptide in mammal blood volume and blood pressure homeostasis are conflicting; according to a report it is not sufficient to activate cGMP and does not inhibit collecting duct transport nor effect diuresis and natriuresis. Appears to bind to specific receptors that are distinct from the receptors bound by the atrial natriuretic and long-acting natriuretic peptides. Possibly functions in protein excretion in urine by maintaining the integrity of the proximal tubules and enhancing protein excretion by decreasing proximal tubular protein reabsorption. May have a role in cardio-renal homeostasis through regulation of diuresis and inhibiting aldosterone synthesis. In vitro, promotes the production of cGMP and induces vasodilation. May promote natriuresis, at least in part, by enhancing prostaglandin E2 synthesis resulting in the inhibition of renal Na+-K+-ATPase. May have a role in potassium excretion but not sodium excretion (natriuresis). Possibly enhances protein excretion in urine by decreasing proximal tubular protein reabsorption. Functionally, hormone produced in the kidneys that appears to be important for maintaining cardio-renal homeostasis. Mediates vasodilation, natriuresis and diuresis primarily in the renal system, in order to maintain the extracellular fluid volume and control the fluid-electrolyte balance. Specifically binds and stimulates cGMP production by renal transmembrane receptors, likely NPR1. Urodilatin not ANP, may be the natriuretic peptide responsible for the regulation of sodium and water homeostasis in the kidney. In terms of biological role, may have a role in cardio-renal homeostasis through regulation of natriuresis and vasodilation. In vivo promotes natriuresis and in vitro, vasodilates renal artery strips. Its function is as follows. May have a role in cardio-renal homeostasis through regulation of regulation of natriuresis and vasodilation. In vivo promotes natriuresis. In vitro, vasodilates intestinal smooth muscle but not smooth muscle strips. May have a role in cardio-renal homeostasis through regulation of natriuresis and vasodilation. In vivo promotes natriuresis. In vitro, selectively vasodilates intestinal and vascular smooth muscle strips. Functionally, may have a role in cardio-renal homeostasis through regulation of natriuresis and vasodilation. In vivo promotes natriuresis. In vitro, selectively vasodilates intestinal smooth muscle but not vascular smooth muscle strips. The chain is Natriuretic peptides A (NPPA) from Canis lupus familiaris (Dog).